The primary structure comprises 355 residues: Anthranilate phosphoribosyltransferase (355 aa).

5-phospho-alpha-D-ribose 1-diphosphate contacts are provided by residues G102, 105 to 106, S110, 112 to 115, 130 to 138, and S142; these read GD, NIST, and KHGNRSVSS. G102 contributes to the anthranilate binding site. Position 114 (S114) interacts with Mg(2+). N133 contributes to the anthranilate binding site. R188 lines the anthranilate pocket. Residues D246 and E247 each contribute to the Mg(2+) site.

It belongs to the anthranilate phosphoribosyltransferase family. In terms of assembly, homodimer. Requires Mg(2+) as cofactor.

It catalyses the reaction N-(5-phospho-beta-D-ribosyl)anthranilate + diphosphate = 5-phospho-alpha-D-ribose 1-diphosphate + anthranilate. Its pathway is amino-acid biosynthesis; L-tryptophan biosynthesis; L-tryptophan from chorismate: step 2/5. Its function is as follows. Catalyzes the transfer of the phosphoribosyl group of 5-phosphorylribose-1-pyrophosphate (PRPP) to anthranilate to yield N-(5'-phosphoribosyl)-anthranilate (PRA). The polypeptide is Anthranilate phosphoribosyltransferase (Pectobacterium atrosepticum (strain SCRI 1043 / ATCC BAA-672) (Erwinia carotovora subsp. atroseptica)).